The sequence spans 395 residues: MRRLFTSESVTEGHPDKICDQISDAILDEILKKDPYARVACETAVTTGLVLVMGEITTECYVDIPRIARDVIRDIGYTRAKYGFDADTCAVITSIDEQSPDIAMGVNKALEARRGELTDAEIEAIGAGDQGLMIGFACDETEELMPMPIMLAHKLARRLAEVRKNGTLSYLRPDGKTQVTVEYEEDRPVRVDSVVVSAQHAPEVDHDTIEKDIIEHVVNVIIPENMMDKNTKIFVNPTGRFVLGGPQADSGLTGRKIIVDTYGGYARHGGGAFSGKDPTKVDRSASYAARYVAKNIVAAGLAKKCEVQVAYAIGVATPLEVEINTFGTGKISDEKISEIVKKVFDLRPAAIIRDLDLRRPIYRQVAAYGHFGRHDLDLPWEKTDRVDILRKLAGI.

ATP is bound at residue histidine 14. Mg(2+) is bound at residue aspartate 16. Residue glutamate 42 coordinates K(+). The L-methionine site is built by glutamate 55 and glutamine 98. Residues 98-108 (QSPDIAMGVNK) form a flexible loop region. ATP contacts are provided by residues 174–176 (DGK), 240–241 (RF), aspartate 249, 255–256 (RK), alanine 272, and lysine 276. Aspartate 249 provides a ligand contact to L-methionine. Lysine 280 lines the L-methionine pocket.

It belongs to the AdoMet synthase family. In terms of assembly, homotetramer; dimer of dimers. Requires Mg(2+) as cofactor. K(+) serves as cofactor.

It is found in the cytoplasm. The enzyme catalyses L-methionine + ATP + H2O = S-adenosyl-L-methionine + phosphate + diphosphate. It functions in the pathway amino-acid biosynthesis; S-adenosyl-L-methionine biosynthesis; S-adenosyl-L-methionine from L-methionine: step 1/1. Catalyzes the formation of S-adenosylmethionine (AdoMet) from methionine and ATP. The overall synthetic reaction is composed of two sequential steps, AdoMet formation and the subsequent tripolyphosphate hydrolysis which occurs prior to release of AdoMet from the enzyme. The protein is S-adenosylmethionine synthase of Caldanaerobacter subterraneus subsp. tengcongensis (strain DSM 15242 / JCM 11007 / NBRC 100824 / MB4) (Thermoanaerobacter tengcongensis).